The following is a 156-amino-acid chain: Phosphopantetheine adenylyltransferase (156 aa).

Residue T9 participates in substrate binding. ATP contacts are provided by residues 9–10 (TF) and H17. K41, L73, and R87 together coordinate substrate. ATP-binding positions include 88–90 (GVR), E98, and 123–129 (WAFVSST).

Belongs to the bacterial CoaD family. In terms of assembly, homohexamer. The cofactor is Mg(2+).

It localises to the cytoplasm. The enzyme catalyses (R)-4'-phosphopantetheine + ATP + H(+) = 3'-dephospho-CoA + diphosphate. It participates in cofactor biosynthesis; coenzyme A biosynthesis; CoA from (R)-pantothenate: step 4/5. In terms of biological role, reversibly transfers an adenylyl group from ATP to 4'-phosphopantetheine, yielding dephospho-CoA (dPCoA) and pyrophosphate. This Haemophilus influenzae (strain 86-028NP) protein is Phosphopantetheine adenylyltransferase.